The primary structure comprises 1691 residues: MEAHQFIKAPGITTAIEQAALAAANSALANAVVVRPFLSHQQVEILINLMQPRQLVFRPEVFWNHPIQRVIHNELEQYCRARSGRCLEIGAHPRSINDNPNVLHRCFLHPVGRDVQRWYTAPTRGPAANCRRSALRGLPPADRTYCFDGFAGCRFAAETGVALYSLHDLQPADVAEAMARHGMTRLYAAFHLPPEVLLPPGTYRTSSYLLIHDGKRAVVTYEGDTSAGYNHDVATLRTWIRTTKVVGEHPLVIERVRGIGCHFVLLITAAPEPSPMPYVPYPRSTEVYVRSIFGPGGSPSLFPTACAVKSTFHAVPTHIWDRLMLFGATLDDQAFCCSRLMTYLRGISYKVTVGALVANEGWNATEDALTAVITAAYLTICHQRYLRTQAISKGMRRLELEHAQKFISRLYSWLFEKSGRDYIPGRQLQFYAQCRRWLSAGFHLDPRTLVFDESVPCSCRTTIRRIAGKFCCFMKWLGQECSCFLQPAEGLAGDQGHDNEAYEGSDVDTAEPATLDITGSYIVDGRSLQTVYQALDLPADLVARAARLSATVTVTETSGRLDCQTMIGNKTFLTTFVDGARLEVNGPEQLNLSFDSQQCSMAAGPFCLTYAAVDGGLEVHFSTAGLESRVVFPPGNAPTAPPSEVTAFCSALYRHNRQSQRQSVIGSLWLHPEGLLGLFPPFSPGHEWRSANPFCGESTLYTRTWSTITDTPLTVGLISGHLDAAPHSGGPPATATGPAVGSSDSPDPDPLPDVTDGSRPSGARPAGPNPNGVPQRRLLHTYPDGAKIYVGSIFESECTWLVNASNAGHRPGGGLCHAFFQRYPDSFDATKFVMRDGLAAYTLTPRPIIHAVAPDYRLEHNPKRLEAAYRETCARRGTAAYPLLGAGIYQVPVSLSFDAWERNHRPFDELYLTELAARWFESNRPGQPTLNITEDTARAANLALELDSGSEVGRACAGCKVEPGVVRYQFTAGVPGSGKSKSVQQADVDVVVVPTRELRNAWRRRGFAAFTPHTAARVTSGRRVVIDEAPSLPPHLLLLHMQRAASVHLLGDPNQIPAIDFEHTGLIPAIRPELVPTSWWHVTHRCPADVCELVRGAYPKIQTTSKVLRSLFWGEPAVGQKLVFTQAAKAAHPGSITVHEAQGATFTTTTIIATADARGLIQSSRAHAIVALTRHTEKCVILDSPGLLREVGISDAIVNNFFLSGGEVGHQRPSVIPRGNPDRNVDVLAAFPPSCQISAFHQLAEELGHRPAPVAAVLPPCPELEQGLLYLPQELASCDSVVTFELTDIVHCRMAAPSQRKAVLSTLVGRYGRRTRLYDAGHTDVRASLARFIPTLGRVTATTCELFELVEAMVEKGQDGSAVLELDLCSRDVSRITFFQKDCNKFTTGETIAHGKVGQGIFRWSKTFCALFGPWFRAIEKAILSLLPQAVFYGDAYDDSVFSAAVAGASHAMVFENDFSEFDSTQNNFSLGLECAIMEECGMPQWLVRLYHAVRSAWILQAPKESLRGFWKKHSGEPGSLLWNTVWNMAIIAHCYEFRDLQVAAFKGDDSVVLCSEYRQSPGAGSLIAGCGLKLKADFRPIGLYAGVVVAPGLGALPDVVRFAGRLSEKNWGPDPERAEQLRLAVQDFLRRLTNVAQICVEVVSRVYGVSPGLVHNLIGMLQTIGDGKAHFTESVKPILDLTHSIMHRSE.

The Alphavirus-like MT domain occupies 56–240 (VFRPEVFWNH…HDVATLRTWI (185 aa)). The methyltransferase stretch occupies residues 60–240 (EVFWNHPIQR…HDVATLRTWI (181 aa)). The interval 241-439 (RTTKVVGEHP…FYAQCRRWLS (199 aa)) is Y-domain. Cys-434 and Cys-481 are oxidised to a cystine. Residues 442 to 509 (FHLDPRTLVF…EAYEGSDVDT (68 aa)) form a putative protease region. The segment at 510 to 691 (AEPATLDITG…FSPGHEWRSA (182 aa)) is zinc-binding. Residues His-671, Glu-673, and His-686 each contribute to the Zn(2+) site. Positions 710–776 (DTPLTVGLIS…GPNPNGVPQR (67 aa)) are hinge. Residues 722 to 778 (LDAAPHSGGPPATATGPAVGSSDSPDPDPLPDVTDGSRPSGARPAGPNPNGVPQRRL) are disordered. A Macro domain is found at 773–919 (VPQRRLLHTY…LYLTELAARW (147 aa)). Residues 783–940 (PDGAKIYVGS…NITEDTARAA (158 aa)) are X-domain. Residues 932–1080 (ITEDTARAAN…RPELVPTSWW (149 aa)) enclose the (+)RNA virus helicase ATP-binding domain. Residues 958-1202 (GCKVEPGVVR…ISDAIVNNFF (245 aa)) are NTPase/helicase. Residue 973 to 980 (GVPGSGKS) coordinates ATP. The 134-residue stretch at 1081–1214 (HVTHRCPADV…GGEVGHQRPS (134 aa)) folds into the (+)RNA virus helicase C-terminal domain. The interval 1205–1691 (GGEVGHQRPS…LTHSIMHRSE (487 aa)) is RNA-directed RNA polymerase. The 112-residue stretch at 1452–1563 (AMVFENDFSE…LCSEYRQSPG (112 aa)) folds into the RdRp catalytic domain.

This sequence belongs to the hepevirus non-structural polyprotein family. As to quaternary structure, the protease domain interacts with host EIF2AK4 (via C-terminus); this interaction inhibits dimerization of EIF2AK4 and prevents EIF2AK4-mediated phosphorylation of host EIF2A. It depends on Mg(2+) as a cofactor. ORF1 polyprotein does not seem to be processed into distinct enzymatic domains by a viral protease belonging to ORF1, but could be processed by a host serine protease like thrombin.

The protein resides in the host cytoplasm. It localises to the host perinuclear region. The catalysed reaction is RNA(n) + a ribonucleoside 5'-triphosphate = RNA(n+1) + diphosphate. It catalyses the reaction GTP + S-adenosyl-L-methionine = N(7)-methyl-GTP + S-adenosyl-L-homocysteine. With respect to regulation, putative protease: Inhibited by chymostatin. Its function is as follows. Methyltransferase: Displays a capping enzyme activity. This function is necessary since all viral RNAs are synthesized in the cytoplasm, and host capping enzymes are restricted to the nucleus. The enzymatic reaction involves a covalent link between 7-methyl-GMP and the methyltransferase, whereas eukaryotic capping enzymes form a covalent complex only with GMP. Methyltransferase catalyzes transfer of a methyl group from S-adenosylmethionine to GTP and GDP to yield m(7)GTP or m(7)GDP. GDP is a better substrate than GTP. This enzyme also displays guanylyltransferase activity to form a covalent complex, methyltransferase-m(7)GMP, from which 7-methyl-GMP is transferred to the mRNA to create the cap structure. Y-domain: Indispensable for virus replication. In terms of biological role, putative protease: The putative protease domain although necessary for replication of the virus may not be a protease but rather a structural Zn(2+)-binding domain. Inhibits induction of IFN-beta by MDA5 and RIG-I pathways and down-regulates the expression of MDA5. Functionally, NTPase/helicase: Multi-functional protein that exhibits NTPase and RNA unwinding activities. Hydrolyzes all NTPs efficiently and unwinds RNA duplexes containing 5' overhangs. Possesses a sequence independent RNA-5'-triphosphatase (RTPase) activity suggestive of its role in forming viral cap structure. Also participates in viral genome replication, RNA translocation and genome packaging/unpackaging. Its function is as follows. RNA-directed RNA polymerase: Plays an essential role in the virus replication. Binds to the 3'-end of the genomic RNA to initiate viral replication. In Bandicota bengalensis (lesser bandicoot rat), this protein is Non-structural polyprotein pORF1.